Consider the following 422-residue polypeptide: Cytochrome P-450 monooxygenase DoxA (422 aa).

A heme-binding site is contributed by cysteine 369.

The protein belongs to the cytochrome P450 family. As to quaternary structure, monomer. It depends on heme as a cofactor.

The protein localises to the cytoplasm. It catalyses the reaction 13-deoxydaunorubicin + NADPH + O2 + H(+) = 13-dihydrodaunorubicin + NADP(+) + H2O. The catalysed reaction is 13-dihydrodaunorubicin + NADPH + O2 + H(+) = daunorubicin + NADP(+) + 2 H2O. It carries out the reaction 13-deoxycarminomycin + NADPH + O2 + H(+) = 13-dihydrocarminomycin + NADP(+) + H2O. The enzyme catalyses 13-dihydrocarminomycin + NADPH + O2 + H(+) = carminomycin + NADP(+) + 2 H2O. It participates in antibiotic biosynthesis; daunorubicin biosynthesis. The protein operates within antibiotic biosynthesis; carminomycin biosynthesis. With respect to regulation, strongly inhibited by dithiothreitol and high ionic strength buffers. Functionally, involved in the biosynthesis of the anthracyclines carminomycin and daunorubicin (daunomycin) which are aromatic polyketide antibiotics that exhibit high cytotoxicity and are widely applied in the chemotherapy of a variety of cancers. In vivo, DoxA catalyzes the C-13 hydroxylation of 13-deoxycarminomycin and 13-deoxydaunorubicin to yield 13-dihydrocarminomycin and 13-dihydrodaunorubicin, respectively, as well as the oxidation of these 13-dihydro-anthracyclines to their respective 13-keto forms, carminomycin and daunorubicin. In vitro, it also catalyzes the C-14 hydroxylation of daunorubicin to form doxorubicin (adriamycin), although this strain is not a doxorubicin producer. It is not able to accept anthracyclinones (aglycones) and anthracyclines with a 10-carbomethoxyl moiety. 13-oxidation of the anthracyclines possessing the 4-methoxy substitution is greatly favored. The anthracycline analog desacetyladriamycin can be oxidized to 10-hydroxydesacetyladriamycin. It can only use NADP. DoxA acts jointly with DauV. This chain is Cytochrome P-450 monooxygenase DoxA (doxA), found in Streptomyces sp. (strain C5).